Reading from the N-terminus, the 208-residue chain is Uridine kinase (208 aa).

12–19 (GGSGGGKT) contacts ATP.

It belongs to the uridine kinase family.

It is found in the cytoplasm. The catalysed reaction is uridine + ATP = UMP + ADP + H(+). The enzyme catalyses cytidine + ATP = CMP + ADP + H(+). It functions in the pathway pyrimidine metabolism; CTP biosynthesis via salvage pathway; CTP from cytidine: step 1/3. Its pathway is pyrimidine metabolism; UMP biosynthesis via salvage pathway; UMP from uridine: step 1/1. This is Uridine kinase from Streptococcus pyogenes serotype M3 (strain ATCC BAA-595 / MGAS315).